Here is a 259-residue protein sequence, read N- to C-terminus: UPF0246 protein VSAL_I2547 (259 aa).

It belongs to the UPF0246 family.

This chain is UPF0246 protein VSAL_I2547, found in Aliivibrio salmonicida (strain LFI1238) (Vibrio salmonicida (strain LFI1238)).